Here is a 151-residue protein sequence, read N- to C-terminus: UPF0208 membrane protein ECA3038 (151 aa).

The next 2 helical transmembrane spans lie at 46–66 (FGIR…IALG) and 69–89 (LGPA…GLWW).

The protein belongs to the UPF0208 family.

Its subcellular location is the cell inner membrane. In Pectobacterium atrosepticum (strain SCRI 1043 / ATCC BAA-672) (Erwinia carotovora subsp. atroseptica), this protein is UPF0208 membrane protein ECA3038.